A 335-amino-acid chain; its full sequence is Lipase chaperone (335 aa).

The helical transmembrane segment at 1-21 (MSGSILLLPLAIALGLGFFIA) threads the bilayer.

It belongs to the lipase chaperone family.

It is found in the cell inner membrane. Its function is as follows. May be involved in the folding of the extracellular lipase during its passage through the periplasm. The chain is Lipase chaperone from Stutzerimonas stutzeri (strain A1501) (Pseudomonas stutzeri).